Here is a 471-residue protein sequence, read N- to C-terminus: Glutamate--tRNA ligase 1 (471 aa).

Residues 15–25 (PSPTGYLHIGG) carry the 'HIGH' region motif. The 'KMSKS' region signature appears at 243-247 (KLSKR). Lysine 246 is an ATP binding site.

This sequence belongs to the class-I aminoacyl-tRNA synthetase family. Glutamate--tRNA ligase type 1 subfamily. Monomer.

It localises to the cytoplasm. The catalysed reaction is tRNA(Glu) + L-glutamate + ATP = L-glutamyl-tRNA(Glu) + AMP + diphosphate. In terms of biological role, catalyzes the attachment of glutamate to tRNA(Glu) in a two-step reaction: glutamate is first activated by ATP to form Glu-AMP and then transferred to the acceptor end of tRNA(Glu). In Dinoroseobacter shibae (strain DSM 16493 / NCIMB 14021 / DFL 12), this protein is Glutamate--tRNA ligase 1.